The following is a 98-amino-acid chain: NADH-ubiquinone oxidoreductase chain 4L (98 aa).

3 helical membrane-spanning segments follow: residues 1–21 (MMSI…GVLI), 28–48 (STLL…ALLI), and 59–79 (APLI…ALLV).

It belongs to the complex I subunit 4L family. In terms of assembly, core subunit of respiratory chain NADH dehydrogenase (Complex I) which is composed of 45 different subunits.

Its subcellular location is the mitochondrion inner membrane. The enzyme catalyses a ubiquinone + NADH + 5 H(+)(in) = a ubiquinol + NAD(+) + 4 H(+)(out). Its function is as follows. Core subunit of the mitochondrial membrane respiratory chain NADH dehydrogenase (Complex I) which catalyzes electron transfer from NADH through the respiratory chain, using ubiquinone as an electron acceptor. Part of the enzyme membrane arm which is embedded in the lipid bilayer and involved in proton translocation. This chain is NADH-ubiquinone oxidoreductase chain 4L (MT-ND4L), found in Lagorchestes hirsutus (Rufous hare-wallaby).